We begin with the raw amino-acid sequence, 443 residues long: Glucose-6-phosphate isomerase (443 aa).

Glu285 serves as the catalytic Proton donor. Active-site residues include His306 and Lys420.

The protein belongs to the GPI family.

It localises to the cytoplasm. It carries out the reaction alpha-D-glucose 6-phosphate = beta-D-fructose 6-phosphate. The protein operates within carbohydrate biosynthesis; gluconeogenesis. Its pathway is carbohydrate degradation; glycolysis; D-glyceraldehyde 3-phosphate and glycerone phosphate from D-glucose: step 2/4. In terms of biological role, catalyzes the reversible isomerization of glucose-6-phosphate to fructose-6-phosphate. The sequence is that of Glucose-6-phosphate isomerase from Staphylococcus saprophyticus subsp. saprophyticus (strain ATCC 15305 / DSM 20229 / NCIMB 8711 / NCTC 7292 / S-41).